The sequence spans 333 residues: Protoheme IX farnesyltransferase (333 aa).

Positions 1-13 are enriched in low complexity; sequence MVSSTSQIISTSP. Residues 1-21 are disordered; sequence MVSSTSQIISTSPSRDDVVPS. 8 helical membrane passes run 38 to 58, 63 to 83, 109 to 129, 132 to 152, 160 to 180, 188 to 208, 245 to 265, and 286 to 306; these read LIPL…GWPL, LACT…LNCL, AVFT…VSGV, LAAG…TAFL, IVIG…AATG, WLFA…AILL, CFGV…LVPF, and AKGL…LLVV.

Belongs to the UbiA prenyltransferase family. Protoheme IX farnesyltransferase subfamily.

It is found in the cell inner membrane. It carries out the reaction heme b + (2E,6E)-farnesyl diphosphate + H2O = Fe(II)-heme o + diphosphate. It participates in porphyrin-containing compound metabolism; heme O biosynthesis; heme O from protoheme: step 1/1. Converts heme B (protoheme IX) to heme O by substitution of the vinyl group on carbon 2 of heme B porphyrin ring with a hydroxyethyl farnesyl side group. The protein is Protoheme IX farnesyltransferase of Prochlorococcus marinus (strain SARG / CCMP1375 / SS120).